Consider the following 113-residue polypeptide: U11-theraphotoxin-Hhn1a (113 aa).

The signal sequence occupies residues 1-21 (MNTVRVTFLLVFVLAVSLGQA). Residues 22–74 (DKDENRMEMQEKTEQGKSYLDFAENLLLQKLEELEAKLLEEDSEESRNSRQKR) constitute a propeptide that is removed on maturation. The segment at 61–83 (EEDSEESRNSRQKRCIGEGVPCD) is disordered. Intrachain disulfides connect Cys-75/Cys-90, Cys-82/Cys-95, and Cys-89/Cys-110.

This sequence belongs to the neurotoxin 14 (magi-1) family. 01 (HNTX-16) subfamily. Expressed by the venom gland.

The protein localises to the secreted. Functionally, probable ion channel inhibitor. The polypeptide is U11-theraphotoxin-Hhn1a (Cyriopagopus hainanus (Chinese bird spider)).